Here is a 440-residue protein sequence, read N- to C-terminus: uncharacterized protein (440 aa).

The N-terminal stretch at 1-17 is a signal peptide; sequence MDRFFCTVWVWSVLFGA. A lipid anchor (N-palmitoyl cysteine) is attached at cysteine 18. Cysteine 18 is lipidated: S-diacylglycerol cysteine. The tract at residues 241-268 is disordered; the sequence is SALQERPSSPEPVVSTIPSPEGEENSAA.

It is found in the cell membrane. This is an uncharacterized protein from Treponema pallidum (strain Nichols).